The following is a 164-amino-acid chain: MSRAIYPGSFDPITNGHLDIIDRASKVFDELIVGVLVNPDKKGLFTVEERVELIERVVKDIPNVKVESFSGLLIDFMKKKQSQVIVKGLRAVSDFEYECQMSLMNKKLDPNIDTVFMMASAMNSFLSSSSVKQVAMFGGCIEGLVPEEVIIDIIKKFDKAYKNC.

Substrate is bound at residue serine 9. ATP-binding positions include 9–10 (SF) and histidine 17. 3 residues coordinate substrate: lysine 41, leucine 73, and lysine 87. ATP-binding positions include 88 to 90 (GLR), glutamate 98, and 123 to 129 (NSFLSSS).

Belongs to the bacterial CoaD family. Homohexamer. Mg(2+) is required as a cofactor.

Its subcellular location is the cytoplasm. It catalyses the reaction (R)-4'-phosphopantetheine + ATP + H(+) = 3'-dephospho-CoA + diphosphate. It functions in the pathway cofactor biosynthesis; coenzyme A biosynthesis; CoA from (R)-pantothenate: step 4/5. Reversibly transfers an adenylyl group from ATP to 4'-phosphopantetheine, yielding dephospho-CoA (dPCoA) and pyrophosphate. The sequence is that of Phosphopantetheine adenylyltransferase from Clostridium kluyveri (strain ATCC 8527 / DSM 555 / NBRC 12016 / NCIMB 10680 / K1).